The following is a 166-amino-acid chain: uncharacterized protein (166 aa).

The next 3 membrane-spanning stretches (helical) occupy residues 4-24 (LNIFPCGLFSYIALLCLEASI), 101-121 (LITCSGAMVFLASLSAISEAI), and 146-166 (SWSSISDIIFCTVAKIIQCFL).

It is found in the membrane. This is an uncharacterized protein from Saccharomyces cerevisiae (strain ATCC 204508 / S288c) (Baker's yeast).